A 293-amino-acid chain; its full sequence is Homoserine kinase (293 aa).

Pro-84–Ala-94 contacts ATP.

The protein belongs to the GHMP kinase family. Homoserine kinase subfamily.

It localises to the cytoplasm. It carries out the reaction L-homoserine + ATP = O-phospho-L-homoserine + ADP + H(+). Its pathway is amino-acid biosynthesis; L-threonine biosynthesis; L-threonine from L-aspartate: step 4/5. Catalyzes the ATP-dependent phosphorylation of L-homoserine to L-homoserine phosphate. The protein is Homoserine kinase of Wolinella succinogenes (strain ATCC 29543 / DSM 1740 / CCUG 13145 / JCM 31913 / LMG 7466 / NCTC 11488 / FDC 602W) (Vibrio succinogenes).